The sequence spans 248 residues: Pulmonary surfactant-associated protein A (248 aa).

Residues 1–20 (MSLCSLAFTLFLTVVAGIKC) form the signal peptide. Positions 28-100 (GSPGIPGAPG…PGERGLPGFP (73 aa)) constitute a Collagen-like domain. 10 positions are modified to 4-hydroxyproline: proline 30, proline 33, proline 36, proline 42, proline 54, proline 57, proline 63, proline 67, proline 70, and proline 76. Residues 31–99 (GIPGAPGNHG…EPGERGLPGF (69 aa)) form a disordered region. Over residues 42-51 (PGRDGRDGVK) the composition is skewed to basic and acidic residues. Positions 54-65 (PGPPGPMGPPGG) are enriched in pro residues. The span at 69–82 (LPGRDGLPGAPGAP) shows a compositional bias: low complexity. Over residues 84 to 93 (ERGDKGEPGE) the composition is skewed to basic and acidic residues. The 116-residue stretch at 133 to 248 (SVGDKVFSTN…LQYRLAVCEF (116 aa)) folds into the C-type lectin domain. 2 cysteine pairs are disulfide-bonded: cysteine 155-cysteine 246 and cysteine 224-cysteine 238. Residue asparagine 207 is glycosylated (N-linked (GlcNAc...) asparagine). Positions 215, 217, 234, and 235 each coordinate Ca(2+).

The protein belongs to the SFTPA family. Oligomeric complex of 6 set of homotrimers.

It localises to the secreted. Its subcellular location is the extracellular space. The protein resides in the extracellular matrix. The protein localises to the surface film. Its function is as follows. In presence of calcium ions, it binds to surfactant phospholipids and contributes to lower the surface tension at the air-liquid interface in the alveoli of the mammalian lung and is essential for normal respiration. Enhances the expression of MYO18A/SP-R210 on alveolar macrophages. This is Pulmonary surfactant-associated protein A (Sftpa1) from Rattus norvegicus (Rat).